A 409-amino-acid polypeptide reads, in one-letter code: Argininosuccinate synthase (409 aa).

ATP is bound by residues Ala10–Ser18 and Ala37. Tyr90 and Ser95 together coordinate L-citrulline. Gly120 contacts ATP. 3 residues coordinate L-aspartate: Thr122, Asn126, and Asp127. Asn126 is an L-citrulline binding site. 5 residues coordinate L-citrulline: Arg130, Ser182, Ser191, Glu267, and Tyr279.

The protein belongs to the argininosuccinate synthase family. Type 1 subfamily. In terms of assembly, homotetramer.

The protein localises to the cytoplasm. The enzyme catalyses L-citrulline + L-aspartate + ATP = 2-(N(omega)-L-arginino)succinate + AMP + diphosphate + H(+). It functions in the pathway amino-acid biosynthesis; L-arginine biosynthesis; L-arginine from L-ornithine and carbamoyl phosphate: step 2/3. The polypeptide is Argininosuccinate synthase (Aromatoleum aromaticum (strain DSM 19018 / LMG 30748 / EbN1) (Azoarcus sp. (strain EbN1))).